The primary structure comprises 522 residues: Lysine--tRNA ligase (522 aa).

Positions 44–52 (PSGLPHIGT) match the 'HIGH' region motif. The 'KMSKS' region signature appears at 290 to 294 (KISKS). K293 contacts ATP.

This sequence belongs to the class-I aminoacyl-tRNA synthetase family.

Its subcellular location is the cytoplasm. It catalyses the reaction tRNA(Lys) + L-lysine + ATP = L-lysyl-tRNA(Lys) + AMP + diphosphate. This is Lysine--tRNA ligase from Rickettsia massiliae (strain Mtu5).